The primary structure comprises 197 residues: Large ribosomal subunit protein bL25 (197 aa).

It belongs to the bacterial ribosomal protein bL25 family. CTC subfamily. Part of the 50S ribosomal subunit; part of the 5S rRNA/L5/L18/L25 subcomplex. Contacts the 5S rRNA. Binds to the 5S rRNA independently of L5 and L18.

Its function is as follows. This is one of the proteins that binds to the 5S RNA in the ribosome where it forms part of the central protuberance. This chain is Large ribosomal subunit protein bL25, found in Carboxydothermus hydrogenoformans (strain ATCC BAA-161 / DSM 6008 / Z-2901).